A 309-amino-acid chain; its full sequence is Zinc-finger homeodomain protein 5 (309 aa).

Positions 1 to 16 (MDMRSHEMIERRREDN) are enriched in basic and acidic residues. Residues 1–21 (MDMRSHEMIERRREDNGNNNG) are disordered. Residues 76 to 125 (YRECLKNHAASVGGSVHDGCGEFMPSGEEGTIEALRCAACDCHRNFHRKE) form a ZF-HD dimerization-type; degenerate zinc finger. The homeobox DNA-binding region spans 240–303 (KKRFRTKFTT…NNKNNAKKPP (64 aa)).

In terms of assembly, homo- and heterodimer with other ZFHD proteins. Interacts with MIF1, MIF2 and MIF3; these interactions prevent nuclear localization and DNA-binding to inhibit transcription regulation activity. Binds to ZHD1, ZHD2, ZHD4, ZHD10 and ZHD11. In terms of tissue distribution, mostly expressed in flowers and inflorescence.

Its subcellular location is the nucleus. Putative transcription factor. Binds DNA at 5'-ATTA-3' consensus promoter regions. Regulates floral architecture and leaf development. Regulators in the abscisic acid (ABA) signal pathway that confers sensitivity to ABA in an ARF2-dependent manner. The polypeptide is Zinc-finger homeodomain protein 5 (ZHD5) (Arabidopsis thaliana (Mouse-ear cress)).